The sequence spans 513 residues: MNPSTLPAPPLAEVYDVAVIGGGINGVGIAADAAGRGLSVFLCEKDDLASHTSSASSKLIHGGLRYLEHYEFRLVREALAEREVLLAKAPHIVKQMRFVLPHRPHLRPAWMIRAGLFLYDHLGKREKLAGSKSLKFGANSPLKSEITKGFEYSDCWVDDARLVVLNAMAAREKGAHIHTQTRCISAHRSNGLWEMNMERADGSLFSIRARALVNAAGPWVAKFIRDDLKLDSPYGIRLIQGSHLIVPRLYEGAHAHILQNEDQRIVFTIPYLNHLTIIGTTDREYTGDPAKVAITEGETDYMLKVVNAHFKKQLSRDDIVHTYSGVRPLCNDESDNPSAITRDYTLALSGGNGEAPILSVFGGKLTTYRKLAESAMAQLAPFFTQMRPSWTAKASLPGGENMTTPERAGRRHPRQIRLGTERDAPRRWATTYGSRTWRLLEGVQALADLGDHLGGGLYTREVDYLCAEEWATQPQDILWRRTKLGLFTTAEEQDNVQRYLSKVGQTRAKIEAA.

16 to 44 (DVAVIGGGINGVGIAADAAGRGLSVFLCE) is a binding site for FAD.

Belongs to the FAD-dependent glycerol-3-phosphate dehydrogenase family. The cofactor is FAD.

It is found in the cytoplasm. The enzyme catalyses a quinone + sn-glycerol 3-phosphate = dihydroxyacetone phosphate + a quinol. This Pseudomonas tolaasii protein is Glycerol-3-phosphate dehydrogenase (glpD).